The sequence spans 129 residues: Small ribosomal subunit protein uS9 (129 aa).

Residues 108 to 129 form a disordered region; that stretch reads RMVERKKYGKKKARKSFQFSKR. Positions 114 to 129 are enriched in basic residues; the sequence is KYGKKKARKSFQFSKR.

It belongs to the universal ribosomal protein uS9 family.

The protein is Small ribosomal subunit protein uS9 of Chlorobaculum tepidum (strain ATCC 49652 / DSM 12025 / NBRC 103806 / TLS) (Chlorobium tepidum).